Here is a 440-residue protein sequence, read N- to C-terminus: Thymidine phosphorylase (440 aa).

It belongs to the thymidine/pyrimidine-nucleoside phosphorylase family. As to quaternary structure, homodimer.

It carries out the reaction thymidine + phosphate = 2-deoxy-alpha-D-ribose 1-phosphate + thymine. Its pathway is pyrimidine metabolism; dTMP biosynthesis via salvage pathway; dTMP from thymine: step 1/2. Functionally, the enzymes which catalyze the reversible phosphorolysis of pyrimidine nucleosides are involved in the degradation of these compounds and in their utilization as carbon and energy sources, or in the rescue of pyrimidine bases for nucleotide synthesis. The sequence is that of Thymidine phosphorylase from Yersinia pseudotuberculosis serotype O:1b (strain IP 31758).